A 364-amino-acid chain; its full sequence is Anthranilate phosphoribosyltransferase (364 aa).

5-phospho-alpha-D-ribose 1-diphosphate contacts are provided by residues Gly-101, 104–105 (GD), Thr-109, 111–114 (NLST), 129–137 (KHGNRAASS), and Gly-141. Anthranilate is bound at residue Gly-101. Ser-113 serves as a coordination point for Mg(2+). Asn-132 contributes to the anthranilate binding site. Residue Arg-187 participates in anthranilate binding. Residues Asp-245 and Glu-246 each coordinate Mg(2+).

The protein belongs to the anthranilate phosphoribosyltransferase family. In terms of assembly, homodimer. It depends on Mg(2+) as a cofactor.

The catalysed reaction is N-(5-phospho-beta-D-ribosyl)anthranilate + diphosphate = 5-phospho-alpha-D-ribose 1-diphosphate + anthranilate. Its pathway is amino-acid biosynthesis; L-tryptophan biosynthesis; L-tryptophan from chorismate: step 2/5. In terms of biological role, catalyzes the transfer of the phosphoribosyl group of 5-phosphorylribose-1-pyrophosphate (PRPP) to anthranilate to yield N-(5'-phosphoribosyl)-anthranilate (PRA). This Mycolicibacterium gilvum (strain PYR-GCK) (Mycobacterium gilvum (strain PYR-GCK)) protein is Anthranilate phosphoribosyltransferase.